A 261-amino-acid chain; its full sequence is Histone H1-I (261 aa).

A compositionally biased stretch (low complexity) spans 1-22 (MSETEAAPVVAPAAEAAPAAEA). Disordered regions lie at residues 1–63 (MSET…PPYI) and 125–261 (FKLS…KGKK). Over residues 41–50 (APKEPKAPKE) the composition is skewed to basic and acidic residues. The 72-residue stretch at 58-129 (THPPYIEMVK…KVKGSFKLSE (72 aa)) folds into the H15 domain. Residues 133–142 (AKAKKSTPKK) show a composition bias toward basic residues. 2 consecutive repeat copies span residues 136–140 (KKSTP) and 188–192 (KKATP). Positions 136–250 (KKSTPKKAKA…KKAPAKKSTP (115 aa)) are 7 X 5 AA repeats of K-K-[AS]-T-P. The DNA-binding element occupies 139–142 (TPKK). Basic and acidic residues predominate over residues 143 to 198 (AKADGEAKPKKSEAKPKKAEAVKKTKAPKEKVERPKKEKKEKVEKKKATPKAEKPK). The 3; approximate repeat unit spans residues 199–203 (KAATP). A run of 4 repeats spans residues 209–213 (KKATP), 230–234 (KKATP), 236–240 (KKAAP), and 246–250 (KKSTP). Over residues 227–250 (AKPKKATPSKKAAPKKAPAKKSTP) the composition is skewed to basic residues. The segment covering 251–261 (KAKEAKSKGKK) has biased composition (basic and acidic residues).

Belongs to the histone H1/H5 family.

The protein localises to the nucleus. Its subcellular location is the chromosome. In terms of biological role, histones H1 are necessary for the condensation of nucleosome chains into higher-order structures. This chain is Histone H1-I (H1-I), found in Volvox carteri (Green alga).